Here is a 617-residue protein sequence, read N- to C-terminus: MKTFTLPASVLFCFLLLIQGLGAAPPGRPDVFPPPLSSEHNGQVAEDAVSRPKDDGVPEVRAARNPEPQDQGELFQGVDPRALASVLLQALDRPASPPSVPGGSQQGTPEEAAEALLTESVRSQTHSLPAPEIQAPAVAPPRPQTQDRDPEEDDRSEELEALASLLQELRDFSPSNAKRQQETAAAETETRTHTLTRVNLESPGPERVWRASWGEFQARVPERAPLPPPVPSQFQARMSESAPLPETHQFGEGVSSPKTHLGETLTPLSKAYQSLGGPFPKVRRLEGSFLGGSEAGERLLQQGLAQVEAGRRQAEATRQAAAQEERLADLASDLLLQYLLQGGARQRDLGGRELQETQQERENEREEEAEQERRGGGEDDVGEEDEEAAEAEAEAEEAERARQNALLFAEEEDGEAGAEDKRSQEEAPGHRRKDAEGAEEGGEEDDDDEEMDPQTIDSLIELSTKLHLPADDVVSIIEEVEEKRKRKKNAPPEPVPPPRAAPAPTHVRSPQPPPPAPARDELPDWNEVLPPWDREEDEVFPPGPYHPFPNYIRPRTLQPPASSRRRHFHHALPPARHHPDLEAQARRAQEEADAEERRLQEQEELENYIEHVLLHRP.

Residues 1 to 23 (MKTFTLPASVLFCFLLLIQGLGA) form the signal peptide. 3 disordered regions span residues 29–75 (PDVF…GELF), 93–204 (RPAS…ESPG), and 239–262 (SESA…THLG). Residues 48 to 64 (AVSRPKDDGVPEVRAAR) are compositionally biased toward basic and acidic residues. Residues 149 to 160 (DPEEDDRSEELE) are compositionally biased toward acidic residues. A compositionally biased stretch (low complexity) spans 182 to 197 (ETAAAETETRTHTLTR). Q313 is subject to Pyrrolidone carboxylic acid. Basic and acidic residues predominate over residues 345 to 364 (RQRDLGGRELQETQQERENE). The tract at residues 345 to 599 (RQRDLGGREL…EEADAEERRL (255 aa)) is disordered. A compositionally biased stretch (acidic residues) spans 378–397 (EDDVGEEDEEAAEAEAEAEE). Over residues 418 to 436 (AEDKRSQEEAPGHRRKDAE) the composition is skewed to basic and acidic residues. A Phosphoserine modification is found at S423. The segment covering 437-452 (GAEEGGEEDDDDEEMD) has biased composition (acidic residues). The segment covering 491–501 (PPEPVPPPRAA) has biased composition (pro residues). The span at 577 to 599 (HHPDLEAQARRAQEEADAEERRL) shows a compositional bias: basic and acidic residues.

In terms of assembly, interacts with HSPA8 on cell membrane. Interacts with C3AR1. Interacts with C1QBP.

The protein localises to the secreted. Its subcellular location is the cytoplasmic vesicle. The protein resides in the secretory vesicle. Functionally, secreted polyprotein that is packaged and proteolytically processed by prohormone convertases PCSK1 and PCSK2 in a cell-type-specific manner. VGF and peptides derived from its processing play many roles in neurogenesis and neuroplasticity associated with learning, memory, depression and chronic pain. Plays a role in the control of body fluid homeostasis by regulating vasopressin release. Suppresses presynaptic glutamatergic neurons connected to vasopressin neurons. Its function is as follows. Plays a role in the control of body fluid homeostasis by regulating vasopressin release. Activates GABAergic interneurons which are inhibitory neurons of the nervous system and thereby suppresses presynaptic glutamatergic neurons. Also stimulates feeding behavior in an orexin-dependent manner in the hypothalamus. Functions as a positive regulator for the activation of orexin neurons resulting in elevated gastric acid secretion and gastric emptying. In terms of biological role, secreted multifunctional peptide that interacts with different receptors and thereby plays multiple physiological roles including modulation of energy expenditure, pain, response to stress, gastric regulation as well as lipolysis. Activates the G-protein-coupled receptor C3AR1 via a folding-upon-binding mechanism leading to enhanced lipolysis in adipocytes. Interacts with gC1qR receptor in macrophages and microglia causing increased levels of intracellular calcium and hypersensitivity. Functionally, plays a role in the regulation of memory formation and depression-related behaviors potentially by influencing synaptic plasticity and neurogenesis. Induces acute and transient activation of the NTRK2/TRKB receptor and subsequent CREB phosphorylation. Also induces insulin secretion in insulinoma cells by increasing intracellular calcium mobilization. The protein is Neurosecretory protein VGF of Mus musculus (Mouse).